The following is a 314-amino-acid chain: Putative steroid dehydrogenase 1 (314 aa).

An NADP(+)-binding site is contributed by 47 to 76 (ASWAVVTGATDGIGKSYSFELAKRGFNVYI). Tyrosine 202 is a catalytic residue.

This sequence belongs to the short-chain dehydrogenases/reductases (SDR) family. 17-beta-HSD 3 subfamily.

The protein is Putative steroid dehydrogenase 1 (stdh-1) of Caenorhabditis elegans.